Here is a 548-residue protein sequence, read N- to C-terminus: Synaptic vesicle 2-related protein (548 aa).

At 1–87 (MEEDLFQLRQ…GFGRFQWKLS (87 aa)) the chain is on the cytoplasmic side. Phosphoserine occurs at positions 25 and 31. A helical transmembrane segment spans residues 88-108 (VLTGLAWMADAMEMMILSILA). The Vesicular portion of the chain corresponds to 109-122 (PQLHCEWRLPSWQV). A helical membrane pass occupies residues 123–143 (ALLTSVVFIGMMSSSTLWGNI). Over 144 to 156 (SDQYGRKTGLKIS) the chain is Cytoplasmic. A helical transmembrane segment spans residues 157-177 (VFWTLYYGILSAFAPVYSWIL). At 178-180 (VLR) the chain is on the vesicular side. The chain crosses the membrane as a helical span at residues 181 to 201 (GLVGFGIGGVPQSVTLYAEFL). At 202–209 (PMKARAKC) the chain is on the cytoplasmic side. A helical membrane pass occupies residues 210-230 (ILLIEVFWAIGTVFEVLLAVF). The Vesicular portion of the chain corresponds to 231-238 (VMPSLGWR). A helical transmembrane segment spans residues 239-259 (WLLLLSAAPLLVFAVLCFWLP). Topologically, residues 260-316 (ESARYDVLSGNQEKAIATLKRIATENGAPMPLGKLIISRQEDRGKMRDLFTPHFRWT) are cytoplasmic. Residues 317–337 (TLLLWFIWFSNAFSYYGLVLL) traverse the membrane as a helical segment. Residues 338–373 (TTELFQAGDVCSISSRKKAVEAKCSLACEYLSKEDY) lie on the Vesicular side of the membrane. Residues 374 to 394 (MDLLWTTLSEFPGVLVTLWVI) traverse the membrane as a helical segment. At 395–401 (DRLGRKK) the chain is on the cytoplasmic side. A helical transmembrane segment spans residues 402 to 422 (TMALCFVIFSLCSLLLFICIG). Over 423–424 (RN) the chain is Vesicular. A helical membrane pass occupies residues 425–445 (VLTLLLFIARAFISGGFQAAY). The Cytoplasmic portion of the chain corresponds to 446–457 (VYTPEVYPTATR). Residues 458–478 (ALGLGTCSGMARVGALITPFI) form a helical membrane-spanning segment. Topologically, residues 479–489 (AQVMLESSVYL) are vesicular. The chain crosses the membrane as a helical span at residues 490 to 510 (TLAVYSGCCLLAALASCFLPI). At 511–548 (ETKGRALQESSHREWGQEMVGRGTNSTGVPRSNSGSQE) the chain is on the cytoplasmic side. Residues 523 to 548 (REWGQEMVGRGTNSTGVPRSNSGSQE) form a disordered region. Positions 533 to 548 (GTNSTGVPRSNSGSQE) are enriched in polar residues. A Phosphoserine modification is found at S542.

Belongs to the major facilitator superfamily. As to expression, detected in brain (at protein level). Detected in brain, in synaptic layers of the cerebellum, hippocampus and cerebral cortex.

Its subcellular location is the cytoplasmic vesicle. It localises to the secretory vesicle. The protein resides in the synaptic vesicle membrane. The chain is Synaptic vesicle 2-related protein (Svop) from Rattus norvegicus (Rat).